Consider the following 241-residue polypeptide: Tumor necrosis factor receptor superfamily member grnd (241 aa).

An N-terminal signal peptide occupies residues 1–27; it reads MSVRKLSALSLSIGGVPLIPSVSLVAA. Over 28 to 98 the chain is Extracellular; that stretch reads ANGESRDCHG…EMLDIQNTQQ (71 aa). 4 disulfide bridges follow: Cys-35-Cys-47, Cys-40-Cys-54, Cys-57-Cys-77, and Cys-61-Cys-73. Asn-63 carries an N-linked (GlcNAc...) asparagine glycan. The helical transmembrane segment at 99–119 threads the bilayer; sequence LILLLLTILLVLIALRCAFQF. The Cytoplasmic portion of the chain corresponds to 120–241; sequence LRWLIGNRCF…PSAATIPVAF (122 aa).

Interacts (via extracellular cysteine-rich domain) with egr (via secreted TNF-homology soluble form); forms heterohexamers when 3 copies associate with egr trimers. Interacts with Traf6/TRAF2 and veli (via PDZ domain). N-glycosylated on Asn-63. Glycosylation regulates ligand binding, specifically reducing affinity for the TNF egr, thereby inhibiting activation of JNK signaling. In terms of tissue distribution, expressed in the adult midgut; under normal conditions expressed at lower levels than the other TNF receptor wgn.

It localises to the apical cell membrane. The protein resides in the cytoplasmic vesicle membrane. Functionally, acts as a receptor for TNF-cytokine egr. Plays a role in activation of JNK signaling and is required for egr-induced apoptosis, including in wing imaginal discs during development. May also play an egr-independent role in cell proliferation. TNF receptor involved in triggering JNK-dependent proliferation of the enteroblast-enterocyte lineage in response to stress-induced release of egr by intestinal stem cells and enteroblasts. Involved in regulation of insulin production in response to dietary protein shortage keeping systemic growth in check. Activation in brain insulin producing cells through binding of egr released into the hemolymph in response to dietary amino acid shortage, results in JNK-dependent inhibition of insulin production. This is Tumor necrosis factor receptor superfamily member grnd from Drosophila melanogaster (Fruit fly).